A 205-amino-acid polypeptide reads, in one-letter code: DNA-directed RNA polymerase RPB5 homolog (205 aa).

The protein belongs to the archaeal RpoH/eukaryotic RPB5 RNA polymerase subunit family. Part of the viral DNA-directed RNA polymerase that consists of 8 polII-like subunits (RPB1, RPB2, RPB3, RPB5, RPB6, RPB7, RPB9, RPB10), a capping enzyme and a termination factor.

The protein resides in the host cytoplasm. Its subcellular location is the virion. Component of the DNA-directed RNA polymerase (RNAP) that catalyzes the transcription in the cytoplasm of viral DNA into RNA using the four ribonucleoside triphosphates as substrates. The sequence is that of DNA-directed RNA polymerase RPB5 homolog from Ornithodoros (relapsing fever ticks).